The following is a 191-amino-acid chain: Ribosomal RNA small subunit methyltransferase G (191 aa).

S-adenosyl-L-methionine contacts are provided by residues Gly62, Phe67, Ile111–Glu112, and Arg124.

This sequence belongs to the methyltransferase superfamily. RNA methyltransferase RsmG family.

Its subcellular location is the cytoplasm. It catalyses the reaction guanosine(527) in 16S rRNA + S-adenosyl-L-methionine = N(7)-methylguanosine(527) in 16S rRNA + S-adenosyl-L-homocysteine. Functionally, specifically methylates the N7 position of guanine in position 527 of 16S rRNA. This Rickettsia prowazekii (strain Madrid E) protein is Ribosomal RNA small subunit methyltransferase G.